The chain runs to 1341 residues: Restriction of telomere capping protein 1 (1341 aa).

Residues 1–39 (MSLSPHVENASIPKGSTPIPKNRNVSSIGKGEFLGSSSS) form a disordered region. 6 WD repeats span residues 207–248 (NKFS…SIDN), 256–296 (EHTR…SKSS), 305–342 (TASD…YKFA), 367–406 (AHTG…NAAE), 439–486 (NTGY…IPKH), and 489–527 (LSET…TVLE). Disordered regions lie at residues 559-593 (PELQ…IGGI), 600-619 (TGLT…GPTF), 630-651 (ASSF…ENRE), 736-765 (KNAT…DDDD), and 789-830 (NEKV…DRAR). Low complexity predominate over residues 630 to 644 (ASSFNSSSASLTSLT). Acidic residues predominate over residues 753–765 (DDGDDDDDDDDDD). Low complexity predominate over residues 814-823 (SSISSISASR). One copy of the WD 7 repeat lies at 843 to 883 (KIQTLVDLISIATHNASVYLSIDDLTNFKIWILIRDSLLWD). Disordered regions lie at residues 941 to 962 (AFRA…KLKE) and 1013 to 1043 (DEHE…KSIP). Basic and acidic residues-rich tracts occupy residues 951–962 (DAEKKPVSKLKE) and 1015–1027 (HEHQ…HDSP). Phosphoserine occurs at positions 1036, 1080, 1087, 1089, 1123, and 1133. WD repeat units follow at residues 1129 to 1169 (SRPD…KQLY) and 1216 to 1255 (LFGI…LITN). The RING-type; degenerate zinc finger occupies 1293–1335 (CVLCERPLKKLTMVILPCGHEGHFQCIQEWFLDENEQECPGGC).

The protein belongs to the WD repeat RTC1 family. As to quaternary structure, component of the SEA complex composed of at least IML1/SEA1, RTC1/SEA2, MTC5/SEA3, NPR2, NPR3, SEA4, SEC13 and SEH1. Interacts with ribosomes.

The protein resides in the vacuole membrane. Functionally, component of the SEA complex which coats the vacuolar membrane and is involved in intracellular trafficking, autophagy, response to nitrogen starvation, and amino acid biogenesis. May be involved in a process influencing telomere capping. The polypeptide is Restriction of telomere capping protein 1 (RTC1) (Saccharomyces cerevisiae (strain ATCC 204508 / S288c) (Baker's yeast)).